The following is a 124-amino-acid chain: Salivary protein 15 Iric-3 (124 aa).

A signal peptide spans 1-22 (MESFVAMKVVCIILLFVIAAEA). Residues Asn82 and Asn93 are each glycosylated (N-linked (GlcNAc...) asparagine). The tract at residues 105–124 (GPNNQTCHKKDECVGYIPGC) is CD4-binding.

This sequence belongs to the salp15 family. In terms of assembly, interacts with host CD4. Interacts with host DC-SIGN (CD209). Interacts with Borrelia outer surface protein C (OspC). Expressed in salivary glands. Detected in fed adult female.

It localises to the secreted. Functionally, salivary tick protein that downregulates host immune system by binding to both dendritic cells, and CD4(+) T cells. Specifically binds to the CD4 coreceptor on T cells. This interaction prevents the activation of the Src kinase, Lck, and its downstream substrate Zap-70, and results in deficient activation of PLCgamma1, the repression of calcium fluxes triggered by T-cell antigen receptor (TCR) ligation, and a subsequent reduction in interleukin-2 production. This salivary protein also binds to DC-SIGN (CD209) on dendritic cells (DC) and activates the Raf-1 kinase/MEK signaling pathway that results in down-regulating expression of pro-inflammatory cytokines. Furthermore, it inhibits T cell proliferation induced by DCs. In addition, it inhibits in vitro keratinocyte inflammation induced by Borrelia burgdorferi or by the major outer surface protein (OspC) of Borrelia. In addition, it downregulates chemokines and monocyte chemoattractant protein 1, as well as several antimicrobial peptides such as defensins, cathelicidin, psoriasin, and RNase 7. Apart from its immunomodulatory activities, it is also associated with protection of Borrelia spirochetes from antibody-mediated killing through its binding to OspC. In vivo, tests on different immune disease animal models show promising therapeutic results, e.g., in inhibiting HIV infection, experimental autoimmune encephalomyelitis, transplantation rejection, and asthma. This chain is Salivary protein 15 Iric-3, found in Ixodes ricinus (Common tick).